The following is a 489-amino-acid chain: Glutamate--tRNA ligase (489 aa).

The 'HIGH' region motif lies at 11-21 (PSPTGHLHIGG). Residues C108, C110, C136, and H138 each coordinate Zn(2+). Residues 253-257 (KLSKR) carry the 'KMSKS' region motif. K256 is a binding site for ATP.

It belongs to the class-I aminoacyl-tRNA synthetase family. Glutamate--tRNA ligase type 1 subfamily. Monomer. The cofactor is Zn(2+).

The protein resides in the cytoplasm. The enzyme catalyses tRNA(Glu) + L-glutamate + ATP = L-glutamyl-tRNA(Glu) + AMP + diphosphate. In terms of biological role, catalyzes the attachment of glutamate to tRNA(Glu) in a two-step reaction: glutamate is first activated by ATP to form Glu-AMP and then transferred to the acceptor end of tRNA(Glu). This Geobacillus thermodenitrificans (strain NG80-2) protein is Glutamate--tRNA ligase.